The following is a 224-amino-acid chain: Orotate phosphoribosyltransferase (224 aa).

5-phospho-alpha-D-ribose 1-diphosphate-binding positions include Lys-26, Tyr-73–Lys-74, Arg-100, Lys-101, Lys-104, His-106, and Glu-127–Ser-135. Thr-131 and Arg-160 together coordinate orotate.

The protein belongs to the purine/pyrimidine phosphoribosyltransferase family. PyrE subfamily. In terms of assembly, homodimer. Mg(2+) serves as cofactor.

The catalysed reaction is orotidine 5'-phosphate + diphosphate = orotate + 5-phospho-alpha-D-ribose 1-diphosphate. Its pathway is pyrimidine metabolism; UMP biosynthesis via de novo pathway; UMP from orotate: step 1/2. Its function is as follows. Catalyzes the transfer of a ribosyl phosphate group from 5-phosphoribose 1-diphosphate to orotate, leading to the formation of orotidine monophosphate (OMP). The protein is Orotate phosphoribosyltransferase of Clostridium beijerinckii (strain ATCC 51743 / NCIMB 8052) (Clostridium acetobutylicum).